A 219-amino-acid chain; its full sequence is 16S rRNA (adenine(1408)-N(1))-methyltransferase (219 aa).

S-adenosyl-L-methionine-binding positions include Gly32, Asn38, Asp55, 87-88 (AE), 104-109 (LFPWGT), and 195-197 (SLW).

Belongs to the methyltransferase superfamily. Kanamycin-apramycin resistance family.

It catalyses the reaction adenosine(1408) in 16S rRNA + S-adenosyl-L-methionine = N(1)-methyladenosine(1408) in 16S rRNA + S-adenosyl-L-homocysteine + H(+). Specifically methylates the N(1) position of adenine 1408 in 16S rRNA. Confers resistance to various aminoglycosides, including kanamycin, neomycin, apramycin, ribostamycin and gentamicin. Methylates only fully assembled 30S subunits. The chain is 16S rRNA (adenine(1408)-N(1))-methyltransferase (npmA) from Escherichia coli.